The primary structure comprises 451 residues: Trigger factor (451 aa).

In terms of domain architecture, PPIase FKBP-type spans 173-258 (GDRVTVDFVG…LKKVEWAHLP (86 aa)).

It belongs to the FKBP-type PPIase family. Tig subfamily.

The protein resides in the cytoplasm. It carries out the reaction [protein]-peptidylproline (omega=180) = [protein]-peptidylproline (omega=0). In terms of biological role, involved in protein export. Acts as a chaperone by maintaining the newly synthesized protein in an open conformation. Functions as a peptidyl-prolyl cis-trans isomerase. This chain is Trigger factor, found in Cupriavidus taiwanensis (strain DSM 17343 / BCRC 17206 / CCUG 44338 / CIP 107171 / LMG 19424 / R1) (Ralstonia taiwanensis (strain LMG 19424)).